Consider the following 147-residue polypeptide: Fluoride-specific ion channel FluC 1 (147 aa).

Helical transmembrane passes span Tyr29–Leu49, Ile61–Phe81, Ala90–Ile110, and Phe118–Val138. Na(+) contacts are provided by Gly97 and Thr100.

This sequence belongs to the fluoride channel Fluc/FEX (TC 1.A.43) family.

The protein resides in the cell membrane. It carries out the reaction fluoride(in) = fluoride(out). Na(+) is not transported, but it plays an essential structural role and its presence is essential for fluoride channel function. Fluoride-specific ion channel. Important for reducing fluoride concentration in the cell, thus reducing its toxicity. The chain is Fluoride-specific ion channel FluC 1 from Staphylococcus aureus (strain Mu50 / ATCC 700699).